The chain runs to 370 residues: Cobalt-precorrin-5B C(1)-methyltransferase (370 aa).

It belongs to the CbiD family.

The catalysed reaction is Co-precorrin-5B + S-adenosyl-L-methionine = Co-precorrin-6A + S-adenosyl-L-homocysteine. The protein operates within cofactor biosynthesis; adenosylcobalamin biosynthesis; cob(II)yrinate a,c-diamide from sirohydrochlorin (anaerobic route): step 6/10. Functionally, catalyzes the methylation of C-1 in cobalt-precorrin-5B to form cobalt-precorrin-6A. The sequence is that of Cobalt-precorrin-5B C(1)-methyltransferase from Prochlorococcus marinus (strain MIT 9215).